A 170-amino-acid chain; its full sequence is Thioredoxin-like protein YneN (170 aa).

A helical transmembrane segment spans residues 5–23 (WLAGILLIMLVGYTGWNLY). The region spanning 33-170 (IQEGQQAPDF…KEMEQKLDLD (138 aa)) is the Thioredoxin domain. Cysteine 71 and cysteine 74 are joined by a disulfide.

Belongs to the thioredoxin family.

Its subcellular location is the cell membrane. This Bacillus subtilis (strain 168) protein is Thioredoxin-like protein YneN (yneN).